The chain runs to 363 residues: Inositol-3-phosphate synthase (363 aa).

Aspartate 68, alanine 127, tyrosine 147, serine 190, aspartate 225, and lysine 238 together coordinate NAD(+).

Belongs to the myo-inositol 1-phosphate synthase family. As to quaternary structure, monomer. NAD(+) serves as cofactor.

It catalyses the reaction D-glucose 6-phosphate = 1D-myo-inositol 3-phosphate. The protein operates within polyol metabolism; myo-inositol biosynthesis; myo-inositol from D-glucose 6-phosphate: step 1/2. In terms of biological role, key enzyme in myo-inositol biosynthesis pathway that catalyzes the conversion of glucose 6-phosphate to 1D-myo-inositol 3-phosphate in a NAD-dependent manner. Plays a key role in oxidative stress resistance as its product is the precursor of the protective antioxidant mycothiol (MSH or AcCys-GlcN-Ins). The polypeptide is Inositol-3-phosphate synthase (Corynebacterium glutamicum (strain ATCC 13032 / DSM 20300 / JCM 1318 / BCRC 11384 / CCUG 27702 / LMG 3730 / NBRC 12168 / NCIMB 10025 / NRRL B-2784 / 534)).